The chain runs to 382 residues: D-galactonate dehydratase 1 (382 aa).

Residue Asp183 coordinates Mg(2+). The active-site Proton donor is the His185. Residues Glu209 and Glu235 each coordinate Mg(2+). His285 serves as the catalytic Proton acceptor.

It belongs to the mandelate racemase/muconate lactonizing enzyme family. GalD subfamily. It depends on Mg(2+) as a cofactor.

It carries out the reaction D-galactonate = 2-dehydro-3-deoxy-D-galactonate + H2O. It participates in carbohydrate acid metabolism; D-galactonate degradation; D-glyceraldehyde 3-phosphate and pyruvate from D-galactonate: step 1/3. Catalyzes the dehydration of D-galactonate to 2-keto-3-deoxy-D-galactonate. This is D-galactonate dehydratase 1 from Escherichia coli (strain SMS-3-5 / SECEC).